The chain runs to 300 residues: NAD kinase (300 aa).

Catalysis depends on Asp75, which acts as the Proton acceptor. NAD(+) contacts are provided by residues 75–76 (DG), 149–150 (ND), Arg177, Asp179, 190–195 (TAYALS), Ala214, and Gln248.

This sequence belongs to the NAD kinase family. A divalent metal cation serves as cofactor.

It is found in the cytoplasm. It carries out the reaction NAD(+) + ATP = ADP + NADP(+) + H(+). Its function is as follows. Involved in the regulation of the intracellular balance of NAD and NADP, and is a key enzyme in the biosynthesis of NADP. Catalyzes specifically the phosphorylation on 2'-hydroxyl of the adenosine moiety of NAD to yield NADP. This chain is NAD kinase, found in Burkholderia orbicola (strain MC0-3).